Reading from the N-terminus, the 172-residue chain is MIAVLLLVFGMTPDYIFPVSADIPVVPNFDAQKTVGKWHPIGMASKLPEVPEYEQKISPMDHMVELTDGDMKLTANYMDGVCKEATAMLKHTDKPGVFKFTGGEIRMMDIDYEKYLIMYMKKSTFEAMYLSARGSDVGDDIKEKFKKLVLEQNFPEAHIKYFNAEQCTPTAA.

An N-terminal signal peptide occupies residues 1–21 (MIAVLLLVFGMTPDYIFPVSA). Cys-82 and Cys-167 are joined by a disulfide.

The protein belongs to the calycin superfamily. Lipocalin family. As to expression, secreted by the epididymal epithelial cells.

It is found in the secreted. It localises to the extracellular space. Functionally, could transport small hydrophobic molecules into the epididymal fluid during the sperm maturation. Binds to the head region of spermatozoa and plays a key role in sperm maturation. This is Epididymal secretory protein 4 from Zootoca vivipara (Common lizard).